Consider the following 363-residue polypeptide: Insulin gene enhancer protein ISL-3 (363 aa).

LIM zinc-binding domains are found at residues 27–80 and 89–143; these read CVGC…CKRD and CAKC…RADH. A DNA-binding region (homeobox) is located at residues 191–250; the sequence is TTRVRTVLNEKQLHTLRTCYNANPRPDALMREQLVEMTGLSPRVIRVWFQNKRCKDKKRS. Residues 328–363 are disordered; that stretch reads FSESGSLGNSSGSDVTSLSSHLPDTPNSMVPSPVET. Residues 329 to 340 show a composition bias toward low complexity; it reads SESGSLGNSSGS. Residues 341-363 are compositionally biased toward polar residues; sequence DVTSLSSHLPDTPNSMVPSPVET.

It localises to the nucleus. Binds to one of the cis-acting domain of the insulin gene enhancer. May be involved in subtype specialization of primary motoneurons. This Oncorhynchus tshawytscha (Chinook salmon) protein is Insulin gene enhancer protein ISL-3 (isl3).